The sequence spans 322 residues: Transaldolase (322 aa).

Lysine 136 functions as the Schiff-base intermediate with substrate in the catalytic mechanism.

The protein belongs to the transaldolase family. Type 1 subfamily. In terms of assembly, homodimer.

The protein localises to the cytoplasm. The catalysed reaction is D-sedoheptulose 7-phosphate + D-glyceraldehyde 3-phosphate = D-erythrose 4-phosphate + beta-D-fructose 6-phosphate. It functions in the pathway carbohydrate degradation; pentose phosphate pathway; D-glyceraldehyde 3-phosphate and beta-D-fructose 6-phosphate from D-ribose 5-phosphate and D-xylulose 5-phosphate (non-oxidative stage): step 2/3. Transaldolase is important for the balance of metabolites in the pentose-phosphate pathway. The protein is Transaldolase of Xanthomonas campestris pv. campestris (strain B100).